A 252-amino-acid chain; its full sequence is F-box protein At5g39250 (252 aa).

The F-box domain maps to M1 to Q42.

This Arabidopsis thaliana (Mouse-ear cress) protein is F-box protein At5g39250.